The following is a 508-amino-acid chain: Ribonuclease Y (508 aa).

One can recognise a KH domain in the interval 198 to 264 (TVSVINLPND…RLTIEKLITD (67 aa)). One can recognise an HD domain in the interval 324 to 417 (VLTHSIEVAK…VQAADAVSAS (94 aa)).

Belongs to the RNase Y family.

Its function is as follows. Endoribonuclease that initiates mRNA decay. This chain is Ribonuclease Y, found in Fusobacterium nucleatum subsp. nucleatum (strain ATCC 25586 / DSM 15643 / BCRC 10681 / CIP 101130 / JCM 8532 / KCTC 2640 / LMG 13131 / VPI 4355).